The sequence spans 953 residues: Nucleotide-binding oligomerization domain-containing protein 1 (953 aa).

Positions 15-107 (GCHSHIKLLK…VDLRLWLSEI (93 aa)) constitute a CARD domain. The NACHT domain occupies 196–531 (ETVFVFGDAG…AFFTAFFLVA (336 aa)). Position 202–209 (202–209 (GDAGVGKS)) interacts with ATP. 2 S-palmitoyl cysteine lipidation sites follow: Cys-558 and Cys-567. 8 LRR repeats span residues 702–725 (FHRQ…ELQP), 727–750 (FSRL…VLCE), 755–778 (YKIV…YVAQ), 783–806 (CRGL…CVAL), 839–862 (HPSL…SLAQ), 867–890 (NTTL…CFAE), 895–918 (NQTL…QLAR), and 923–946 (NTAI…VFEN). Cys-952 is lipidated: S-palmitoyl cysteine.

Belongs to the NOD1-NOD2 family. In terms of assembly, homooligomer: homooligomerizes following ligand-binding, promoting RIPK2 recruitment. Interacts (via CARD domain) with RIPK2 (via CARD domain). Following RIPK2 recruitment, RIPK2 homooligomerizes via its CARD domain and forms long filaments named RIPosomes. Interacts (via CARD domain) with ubiquitin; inhibiting interaction with RIPK2. Interacts with ARHGEF2. Interacts with NLRP10 and recruits it to the cell membrane following invasive bacterial infection. Interacts with IFIH1; this interaction promotes transcription of antiviral genes and inhibition of viral replication. Interacts with Irgm1; promoting NOD1 degradation. Interacts with ATG16L1. Post-translationally, ubiquitinated. 'Lys-48'-linked polyubiquitination by RNF34 promotes proteasomal degradation and thereby negatively regulates NOD1 for instance in NF-kappa-B activation. Palmitoylated. Palmitoylation is required for proper recruitment to the bacterial entry site and hence for proper signaling upon cognate peptidoglycan detection. In terms of processing, degraded via selective autophagy following interaction with Irgm1. Irgm1 promotes NOD1-RIPK2 RIPosome recruitment to autophagosome membranes, promoting their SQSTM1/p62-dependent autophagic degradation. In terms of tissue distribution, although ubiquitously expressed, NOD1 levels are more abundant in immune cells, the gastrointestinal tract, and adipose tissue.

Its subcellular location is the cell membrane. The protein resides in the apical cell membrane. It is found in the basolateral cell membrane. The protein localises to the cytoplasm. In terms of biological role, pattern recognition receptor (PRR) that detects bacterial peptidoglycan fragments and other danger signals and thus participates in both innate and adaptive immune responses. Specifically recognizes and binds gamma-D-glutamyl-meso-diaminopimelic acid (iE-DAP), a dipeptide present in peptidoglycan of Gram-negative bacteria. Preferentially binds iE-DAP in tetrapeptide-containing muropeptides (MurNAc-TetraDAP or TetraDAP). Ligand binding triggers oligomerization that facilitates the binding and subsequent activation of the proximal adapter receptor-interacting RIPK2. Following recruitment, RIPK2 undergoes 'Met-1'- (linear) and 'Lys-63'-linked polyubiquitination by E3 ubiquitin-protein ligases XIAP, BIRC2, BIRC3 and the LUBAC complex, becoming a scaffolding protein for downstream effectors, triggering activation of the NF-kappa-B and MAP kinases signaling. This in turn leads to the transcriptional activation of hundreds of genes involved in immune response. Also acts as a regulator of antiviral response elicited by dsRNA and the expression of RLR pathway members by targeting IFIH1 and TRAF3 to modulate the formation of IFIH1-MAVS and TRAF3-MAVS complexes leading to increased transcription of type I IFNs. Also acts as a regulator of autophagy via its interaction with ATG16L1, possibly by recruiting ATG16L1 at the site of bacterial entry. Besides recognizing pathogens, also involved in the endoplasmic reticulum stress response: acts by sensing and binding to the cytosolic metabolite sphingosine-1-phosphate generated in response to endoplasmic reticulum stress, initiating an inflammation process that leads to activation of the NF-kappa-B and MAP kinases signaling. In addition, plays a role in insulin trafficking in beta cells in a cell-autonomous manner. Mechanistically, upon recognizing cognate ligands, NOD1 and RIPK2 localize to insulin vesicles where they recruit RAB1A to direct insulin trafficking through the cytoplasm. In Mus musculus (Mouse), this protein is Nucleotide-binding oligomerization domain-containing protein 1.